Consider the following 103-residue polypeptide: Pyrimidine/purine nucleoside phosphorylase (103 aa).

This sequence belongs to the nucleoside phosphorylase PpnP family.

The catalysed reaction is a purine D-ribonucleoside + phosphate = a purine nucleobase + alpha-D-ribose 1-phosphate. It carries out the reaction adenosine + phosphate = alpha-D-ribose 1-phosphate + adenine. It catalyses the reaction cytidine + phosphate = cytosine + alpha-D-ribose 1-phosphate. The enzyme catalyses guanosine + phosphate = alpha-D-ribose 1-phosphate + guanine. The catalysed reaction is inosine + phosphate = alpha-D-ribose 1-phosphate + hypoxanthine. It carries out the reaction thymidine + phosphate = 2-deoxy-alpha-D-ribose 1-phosphate + thymine. It catalyses the reaction uridine + phosphate = alpha-D-ribose 1-phosphate + uracil. The enzyme catalyses xanthosine + phosphate = alpha-D-ribose 1-phosphate + xanthine. Catalyzes the phosphorolysis of diverse nucleosides, yielding D-ribose 1-phosphate and the respective free bases. Can use uridine, adenosine, guanosine, cytidine, thymidine, inosine and xanthosine as substrates. Also catalyzes the reverse reactions. The sequence is that of Pyrimidine/purine nucleoside phosphorylase from Cupriavidus metallidurans (strain ATCC 43123 / DSM 2839 / NBRC 102507 / CH34) (Ralstonia metallidurans).